The chain runs to 473 residues: MRMLSRNATFNSHGQDSSYFLGWQEYEKNPYHEVHNTNGIIQMGLAENQLCFDLLESWLAKNPEAAAFKKNGESIFAELALFQDYHGLPAFKKAMVDFMAEIRGNKVTFDPNHLVLTAGATSANETFIFCLADPGEAVLIPTPYYPGFDRDLKWRTGVEIVPIHCTSSNGFQITETALEEAYQEAEKRNLRVKGVLVTNPSNPLGTTMTRNELYLLLSFVEDKGIHLISDEIYSGTAFSSPSFISVMEVLKDRNCDENSEVWQRVHVVYSLSKDLGLPGFRVGAIYSNDDMVVAAATKMSSFGLVSSQTQHLLSAMLSDKKLTKNYIAENHKRLKQRQKKLVSGLQKSGISCLNGNAGLFCWVDMRHLLRSNTFEAEMELWKKIVYEVHLNISPGSSCHCTEPGWFRVCFANLPERTLDLAMQRLKAFVGEYYNVPEVNGGSQSSHLSHSRRQSLTKWVSRLSFDDRGPIPGR.

Substrate contacts are provided by residues 84–85 (DY), Y145, and D151. At K273 the chain carries N6-(pyridoxal phosphate)lysine.

It belongs to the class-I pyridoxal-phosphate-dependent aminotransferase family. As to quaternary structure, homodimer. Requires pyridoxal 5'-phosphate as cofactor.

The catalysed reaction is S-adenosyl-L-methionine = 1-aminocyclopropane-1-carboxylate + S-methyl-5'-thioadenosine + H(+). The enzyme catalyses (2S)-2-amino-3-butenoate + H2O = 2-oxobutanoate + NH4(+). Its pathway is alkene biosynthesis; ethylene biosynthesis via S-adenosyl-L-methionine; ethylene from S-adenosyl-L-methionine: step 1/2. Its activity is regulated as follows. Inhibited by L-aminoethoxyvinylglycine (AVG). Inhibited by L-vinylglycine (L-VG). Inhibited by S-methylmethionine through a L-VG ketimine intermediate. Functionally, catalyzes the formation of 1-aminocyclopropane-1-carboxylate, a direct precursor of ethylene in higher plants. Also catalyzes the conversion of L-vinylglycine (L-VG) to alpha-ketobutyrate and ammonia. Can use S-methylmethionine as substrate. In Malus domestica (Apple), this protein is 1-aminocyclopropane-1-carboxylate synthase.